The chain runs to 514 residues: MSSPDKVSVCGAGFDLEGGKKAGSRTASPGAPGAHSHGLDLGVPGSGDGKSESGFTDPEGFSFESESELIEQGRVVLWGREGRPGTPVDDQGDVVDYSFYLADEPAAIVPPPSVQGHPFPEGAAAEGSAENWADAEVGPSGRDVLGHSPGKWQQASAGRLHLCGPGPVRAWKNPERGSKSRWSLRVDPQQPSAKGPTRLPTHDSDSADESSDLPLMKVGICRNEGSQAKPGSPKKRADTSRQASFHCKESYLPVPGRFLTSAPRGLTPVAERPAVGELEDSPQKKMQSRAWGKVEVRPSCSGAAAAGALPQGLSRRKMAGGKKSLGGASQLALGRGFPACGERLSAAPPEPATFPPFSGVRPQGMSKKPQKPKHSSPGKKPAGRKTRESQAAAREDNDPNRDEVPRAQLPTHRPGLPRLSVRRGEFSSSDPNIRAPQLPGTSEPSAYSPGGLVPRRHAPSGNQQPPVHPPRPERQQQPPGAQGCPRCIWLQREIEDLTQQLAAMQFLTDKFQDL.

Disordered stretches follow at residues 1-68, 109-244, and 272-484; these read MSSP…SESE, VPPP…RQAS, and RPAV…AQGC. Residues 368-384 are compositionally biased toward basic residues; it reads KPQKPKHSSPGKKPAGR. The segment covering 385–405 has biased composition (basic and acidic residues); it reads KTRESQAAAREDNDPNRDEVP.

This is an uncharacterized protein from Homo sapiens (Human).